The chain runs to 142 residues: NADH-quinone oxidoreductase subunit A (142 aa).

3 helical membrane-spanning segments follow: residues F8 to T28, F63 to W83, and F93 to W113.

The protein belongs to the complex I subunit 3 family. As to quaternary structure, NDH-1 is composed of 14 different subunits. Subunits NuoA, H, J, K, L, M, N constitute the membrane sector of the complex.

It is found in the cell inner membrane. The catalysed reaction is a quinone + NADH + 5 H(+)(in) = a quinol + NAD(+) + 4 H(+)(out). Functionally, NDH-1 shuttles electrons from NADH, via FMN and iron-sulfur (Fe-S) centers, to quinones in the respiratory chain. The immediate electron acceptor for the enzyme in this species is believed to be a menaquinone. Couples the redox reaction to proton translocation (for every two electrons transferred, four hydrogen ions are translocated across the cytoplasmic membrane), and thus conserves the redox energy in a proton gradient. The chain is NADH-quinone oxidoreductase subunit A from Chlorobium phaeobacteroides (strain BS1).